Reading from the N-terminus, the 1386-residue chain is DNA-directed RNA polymerase subunit beta' (1386 aa).

Residues C75, C77, C90, and C93 each coordinate Zn(2+). Positions 466, 468, and 470 each coordinate Mg(2+). 4 residues coordinate Zn(2+): C809, C883, C890, and C893.

This sequence belongs to the RNA polymerase beta' chain family. The RNAP catalytic core consists of 2 alpha, 1 beta, 1 beta' and 1 omega subunit. When a sigma factor is associated with the core the holoenzyme is formed, which can initiate transcription. Requires Mg(2+) as cofactor. It depends on Zn(2+) as a cofactor.

It catalyses the reaction RNA(n) + a ribonucleoside 5'-triphosphate = RNA(n+1) + diphosphate. Functionally, DNA-dependent RNA polymerase catalyzes the transcription of DNA into RNA using the four ribonucleoside triphosphates as substrates. In Oleidesulfovibrio alaskensis (strain ATCC BAA-1058 / DSM 17464 / G20) (Desulfovibrio alaskensis), this protein is DNA-directed RNA polymerase subunit beta'.